Consider the following 194-residue polypeptide: Holliday junction branch migration complex subunit RuvA (194 aa).

Positions 1 to 62 (MIGYLKGNVI…EDSLDLYGFK (62 aa)) are domain I. The interval 63 to 136 (TMEERELFET…KGKLKDMSGD (74 aa)) is domain II. Residues 136–140 (DFEEP) are flexible linker. The segment at 141-194 (LPDNRNTELSDALASLGYSELEIEEALSNADIKNNGSLEENIKKALGYLGSKGS) is domain III.

Belongs to the RuvA family. In terms of assembly, homotetramer. Forms an RuvA(8)-RuvB(12)-Holliday junction (HJ) complex. HJ DNA is sandwiched between 2 RuvA tetramers; dsDNA enters through RuvA and exits via RuvB. An RuvB hexamer assembles on each DNA strand where it exits the tetramer. Each RuvB hexamer is contacted by two RuvA subunits (via domain III) on 2 adjacent RuvB subunits; this complex drives branch migration. In the full resolvosome a probable DNA-RuvA(4)-RuvB(12)-RuvC(2) complex forms which resolves the HJ.

The protein resides in the cytoplasm. In terms of biological role, the RuvA-RuvB-RuvC complex processes Holliday junction (HJ) DNA during genetic recombination and DNA repair, while the RuvA-RuvB complex plays an important role in the rescue of blocked DNA replication forks via replication fork reversal (RFR). RuvA specifically binds to HJ cruciform DNA, conferring on it an open structure. The RuvB hexamer acts as an ATP-dependent pump, pulling dsDNA into and through the RuvAB complex. HJ branch migration allows RuvC to scan DNA until it finds its consensus sequence, where it cleaves and resolves the cruciform DNA. The protein is Holliday junction branch migration complex subunit RuvA of Halothermothrix orenii (strain H 168 / OCM 544 / DSM 9562).